A 445-amino-acid polypeptide reads, in one-letter code: Exodeoxyribonuclease 7 large subunit (445 aa).

It belongs to the XseA family. Heterooligomer composed of large and small subunits.

Its subcellular location is the cytoplasm. It catalyses the reaction Exonucleolytic cleavage in either 5'- to 3'- or 3'- to 5'-direction to yield nucleoside 5'-phosphates.. Bidirectionally degrades single-stranded DNA into large acid-insoluble oligonucleotides, which are then degraded further into small acid-soluble oligonucleotides. The protein is Exodeoxyribonuclease 7 large subunit of Staphylococcus aureus (strain JH1).